Consider the following 534-residue polypeptide: Probable DNA polymerase epsilon subunit 2 (534 aa).

The protein belongs to the DNA polymerase epsilon subunit B family. As to quaternary structure, consists of four subunits.

It localises to the nucleus. Functionally, accessory component of the DNA polymerase epsilon complex. Participates in DNA repair and in chromosomal DNA replication. The sequence is that of Probable DNA polymerase epsilon subunit 2 (pole-2) from Caenorhabditis elegans.